The primary structure comprises 367 residues: Alginate lyase (367 aa).

Positions 1-24 (MTLLKRISSPALLALALFGGAAHA) are cleaved as a signal peptide. Substrate-binding positions include 63 to 64 (SK), 136 to 137 (HT), and Tyr-254.

It belongs to the polysaccharide lyase 5 family.

It localises to the periplasm. The enzyme catalyses Eliminative cleavage of alginate to give oligosaccharides with 4-deoxy-alpha-L-erythro-hex-4-enuronosyl groups at their non-reducing ends and beta-D-mannuronate at their reducing end.. In terms of biological role, catalyzes the depolymerization of alginate by cleaving the beta-1,4 glycosidic bond between two adjacent sugar residues via a beta-elimination mechanism. May serve to degrade mislocalized alginate that is trapped in the periplasmic space. The polypeptide is Alginate lyase (Pseudomonas putida (strain GB-1)).